A 2771-amino-acid chain; its full sequence is Teneurin-4 (2771 aa).

Positions 1–22 (MDVKERKPYRSLTRRRDAERRY) are enriched in basic and acidic residues. A disordered region spans residues 1 to 45 (MDVKERKPYRSLTRRRDAERRYTSSSADSEEGKGPQKSYSSSETL). Residues 1–341 (MDVKERKPYR…KPSKYCNWKC (341 aa)) enclose the Teneurin N-terminal domain. Residues 1 to 345 (MDVKERKPYR…YCNWKCAALS (345 aa)) lie on the Cytoplasmic side of the membrane. Phosphoserine is present on Ser-124. A disordered region spans residues 132–233 (WGRSTRSGRS…PPAGSAQEPT (102 aa)). The segment covering 134 to 155 (RSTRSGRSSCLSSRANSNLTLT) has biased composition (low complexity). Residues 156–166 (DTEHENTETDH) are compositionally biased toward basic and acidic residues. Thr-178 is modified (phosphothreonine). Positions 191–211 (QHHAASINSLNRGNFTPRSNP) are enriched in polar residues. The chain crosses the membrane as a helical span at residues 346–366 (AILISATLVILLAYFVAMHLF). The Extracellular segment spans residues 367-2771 (GLNWHLQPME…FMRQSEMGRR (2405 aa)). Residues 403-428 (SGGTGLETPDRKGKGAAEGKPSSLFP) are disordered. A compositionally biased stretch (basic and acidic residues) spans 410–419 (TPDRKGKGAA). A glycan (N-linked (GlcNAc...) asparagine) is linked at Asn-469. The segment at 509 to 528 (ARSLEGPQRQSRGPVPPSSH) is disordered. 8 EGF-like domains span residues 564 to 595 (SVDN…PDCG), 596 to 626 (RASC…AECD), 628 to 660 (PTNQ…ESCE), 661 to 692 (EVDC…TNCE), 694 to 727 (PRAT…HDCS), 728 to 759 (IEIC…ACDQ), 760 to 789 (RACH…EHCT), and 790 to 833 (IAHY…TGCD). Disulfide bonds link Cys-568–Cys-578, Cys-572–Cys-583, Cys-585–Cys-594, Cys-603–Cys-614, Cys-616–Cys-625, Cys-632–Cys-643, Cys-637–Cys-648, Cys-650–Cys-659, Cys-664–Cys-675, Cys-669–Cys-680, Cys-682–Cys-691, Cys-702–Cys-715, Cys-717–Cys-726, Cys-731–Cys-741, Cys-735–Cys-746, Cys-748–Cys-757, Cys-762–Cys-772, Cys-766–Cys-777, Cys-779–Cys-788, Cys-802–Cys-812, Cys-806–Cys-821, and Cys-823–Cys-832. 2 N-linked (GlcNAc...) asparagine glycosylation sites follow: Asn-942 and Asn-1261. 5 NHL repeats span residues 1218–1261 (SCPS…PSGN), 1266–1310 (LEMR…VKST), 1336–1380 (TRCG…NGII), 1395–1446 (LSCD…VAGR), and 1525–1568 (CFSG…IRKN). The stretch at 1578–1597 (YELSSPIDQELYLFDTSGKH) is one YD 1 repeat. N-linked (GlcNAc...) asparagine glycosylation is present at Asn-1611. 3 YD repeats span residues 1614–1634 (YTGD…VNVR), 1677–1696 (YHGN…WTTF), and 1697–1719 (YEYD…SSFR). N-linked (GlcNAc...) asparagine glycosylation is found at Asn-1707, Asn-1743, Asn-1801, and Asn-1886. 18 YD repeats span residues 1889-1908 (YSPG…ERME), 1930-1948 (YLEK…YIFE), 1949-1969 (FDKN…QTLE), 1976-1993 (YYRN…VIQD), 1994-2015 (FTED…VIYK), 2016-2033 (YGKL…TKVS), 2036-2056 (YDET…FTCT), 2059-2079 (YRQI…EGMV), 2087-2106 (YDNS…TPLP), 2112-2129 (YDDV…GVIY), 2130-2156 (YDIN…MKEV), 2158-2171 (YEIF…MTVQ), 2172-2195 (YDNM…TRYS), 2198-2218 (YDAD…WRYS), 2219-2239 (YDLN…LTPL), 2241-2261 (YDLR…DEDG), 2273-2293 (YNSA…SVRY), and 2295-2315 (YDGL…LQFF). N-linked (GlcNAc...) asparagine glycosylation is present at Asn-1987. N-linked (GlcNAc...) asparagine glycosylation is present at Asn-2190. A glycan (N-linked (GlcNAc...) asparagine) is linked at Asn-2330. The stretch at 2341–2382 (YDLQGHLFAMELSSGDEFYIACDNIGTPLAVFSGTGLMIKQI) is one YD 23 repeat. Residue Asn-2648 is glycosylated (N-linked (GlcNAc...) asparagine).

It belongs to the tenascin family. Teneurin subfamily. Homodimer; disulfide-linked. May also form heterodimer with either TENM1 or TENM2 or TENM3. As to expression, expressed in brain and spinal cord (at protein level). Expressed in neurons and oligodendrocytes of the spinal cord. Expressed weakly in kidney, lung and spleen. Expressed in the cortex, CA1, CA2 and CA3 of the hippocampus. Expressed in the white matter, Purkinje cells and molecular layer of the cerebellum.

The protein localises to the cell membrane. Its subcellular location is the cell projection. It is found in the nucleus. It localises to the cytoplasm. Involved in neural development, regulating the establishment of proper connectivity within the nervous system. Plays a role in the establishment of the anterior-posterior axis during gastrulation. Regulates the differentiation and cellular process formation of oligodendrocytes and myelination of small-diameter axons in the central nervous system (CNS). Promotes activation of focal adhesion kinase. May function as a cellular signal transducer. The sequence is that of Teneurin-4 (Tenm4) from Mus musculus (Mouse).